We begin with the raw amino-acid sequence, 1055 residues long: Protein SUPPRESSOR OF QUENCHING 1, chloroplastic (1055 aa).

Residues Met1 to Ser56 constitute a chloroplast transit peptide. Val57 carries the N-acetylvaline modification. Over Ala59–Arg327 the chain is Stromal. Asp80 acts as the Nucleophile in catalysis. Mg(2+) is bound by residues Asp80 and Asp82. Asp80 contacts substrate. The Proton donor role is filled by Asp82. Residues Glu89, Thr118 to Lys122, Ala141 to Arg144, and Ser183 to Lys189 contribute to the substrate site. Asp242 is a binding site for Mg(2+). Residues Tyr328–Trp345 form a helical membrane-spanning segment. At Lys346–Arg1055 the chain is on the lumenal side. The region spanning Ala359–Thr536 is the Thioredoxin domain. Cys431 and Cys434 are joined by a disulfide. 5 NHL repeats span residues Pro565–Glu597, Gly611–Leu647, Gly673–Leu712, Leu802–Val832, and Gly854–Asn887.

This sequence in the N-terminal section; belongs to the HAD-like hydrolase superfamily. It in the C-terminal section; belongs to the thioredoxin family. Requires Mg(2+) as cofactor.

It localises to the plastid. Its subcellular location is the chloroplast thylakoid membrane. Its function is as follows. Required to maintain light harvesting efficiency, especially during nonphotochemical quenching (NPQ) recovery, via the regulation of chlorophyll excited-state lifetime probably by preventing the formation of a slowly reversible form of antenna quenching. The sequence is that of Protein SUPPRESSOR OF QUENCHING 1, chloroplastic from Arabidopsis thaliana (Mouse-ear cress).